Consider the following 313-residue polypeptide: Methionyl-tRNA formyltransferase (313 aa).

A (6S)-5,6,7,8-tetrahydrofolate-binding site is contributed by 113 to 116 (SLLP).

Belongs to the Fmt family.

The catalysed reaction is L-methionyl-tRNA(fMet) + (6R)-10-formyltetrahydrofolate = N-formyl-L-methionyl-tRNA(fMet) + (6S)-5,6,7,8-tetrahydrofolate + H(+). Its function is as follows. Attaches a formyl group to the free amino group of methionyl-tRNA(fMet). The formyl group appears to play a dual role in the initiator identity of N-formylmethionyl-tRNA by promoting its recognition by IF2 and preventing the misappropriation of this tRNA by the elongation apparatus. The chain is Methionyl-tRNA formyltransferase from Acidithiobacillus ferrooxidans (strain ATCC 23270 / DSM 14882 / CIP 104768 / NCIMB 8455) (Ferrobacillus ferrooxidans (strain ATCC 23270)).